A 185-amino-acid polypeptide reads, in one-letter code: Large ribosomal subunit protein bL25 (185 aa).

The protein belongs to the bacterial ribosomal protein bL25 family. CTC subfamily. Part of the 50S ribosomal subunit; part of the 5S rRNA/L5/L18/L25 subcomplex. Contacts the 5S rRNA. Binds to the 5S rRNA independently of L5 and L18.

This is one of the proteins that binds to the 5S RNA in the ribosome where it forms part of the central protuberance. The chain is Large ribosomal subunit protein bL25 from Chlamydia trachomatis serovar A (strain ATCC VR-571B / DSM 19440 / HAR-13).